We begin with the raw amino-acid sequence, 71 residues long: Ribosome modulation factor (71 aa).

Belongs to the ribosome modulation factor family.

It is found in the cytoplasm. In terms of biological role, during stationary phase, converts 70S ribosomes to an inactive dimeric form (100S ribosomes). In Pseudomonas savastanoi pv. phaseolicola (strain 1448A / Race 6) (Pseudomonas syringae pv. phaseolicola (strain 1448A / Race 6)), this protein is Ribosome modulation factor.